The primary structure comprises 501 residues: Acetylcholine receptor subunit beta (501 aa).

A signal peptide spans methionine 1–glycine 23. The Extracellular segment spans residues serine 24–lysine 244. Residues cysteine 151 and cysteine 165 are joined by a disulfide bond. N-linked (GlcNAc...) asparagine glycosylation occurs at asparagine 164. 3 consecutive transmembrane segments (helical) span residues proline 245–leucine 269, methionine 277–alanine 295, and tyrosine 311–leucine 332. The Cytoplasmic portion of the chain corresponds to histidine 333–arginine 469. Position 390 is a phosphotyrosine; by Tyr-kinases (tyrosine 390). A helical transmembrane segment spans residues leucine 470–leucine 488.

The protein belongs to the ligand-gated ion channel (TC 1.A.9) family. Acetylcholine receptor (TC 1.A.9.1) subfamily. Beta-1/CHRNB1 sub-subfamily. Pentamer of two alpha chains, and one each of the beta, delta, and gamma (in immature muscle) or epsilon (in mature muscle) chains. The muscle heteropentamer composed of alpha-1, beta-1, delta, epsilon subunits interacts with the alpha-conotoxin ImII.

The protein resides in the postsynaptic cell membrane. It localises to the cell membrane. The enzyme catalyses K(+)(in) = K(+)(out). It carries out the reaction Na(+)(in) = Na(+)(out). In terms of biological role, after binding acetylcholine, the AChR responds by an extensive change in conformation that affects all subunits and leads to opening of an ion-conducting channel across the plasma membrane. This is Acetylcholine receptor subunit beta from Homo sapiens (Human).